Here is a 195-residue protein sequence, read N- to C-terminus: Molybdenum cofactor guanylyltransferase (195 aa).

GTP is bound by residues 10 to 12 (LAG), Lys-23, Asn-51, Asp-69, and Asp-99. Asp-99 is a Mg(2+) binding site.

It belongs to the MobA family. Monomer. Mg(2+) serves as cofactor.

It localises to the cytoplasm. It carries out the reaction Mo-molybdopterin + GTP + H(+) = Mo-molybdopterin guanine dinucleotide + diphosphate. Transfers a GMP moiety from GTP to Mo-molybdopterin (Mo-MPT) cofactor (Moco or molybdenum cofactor) to form Mo-molybdopterin guanine dinucleotide (Mo-MGD) cofactor. The polypeptide is Molybdenum cofactor guanylyltransferase (Histophilus somni (strain 2336) (Haemophilus somnus)).